We begin with the raw amino-acid sequence, 643 residues long: uncharacterized protein (643 aa).

Positions 179–199 (FKSSQLQQSPSPNKKSPSYSQ) are enriched in low complexity. Disordered regions lie at residues 179-200 (FKSS…YSQV) and 349-377 (KRSN…STEN).

This is an uncharacterized protein from Caenorhabditis elegans.